We begin with the raw amino-acid sequence, 260 residues long: Flavin-dependent thymidylate synthase (260 aa).

Residues 2–203 (ISVKLVSYTN…PRLFKYTGPN (202 aa)) enclose the ThyX domain. Residues Ser56, 80–82 (RHR), and Gln88 contribute to the FAD site. DUMP contacts are provided by residues 77–80 (QLVR), 88–92 (QMSHR), and Arg142. Residues 80–90 (RHRIASYTQMS) carry the ThyX motif motif. FAD is bound by residues 158–160 (NAR) and Asn164. DUMP is bound at residue Arg169. Arg169 functions as the Involved in ionization of N3 of dUMP, leading to its activation in the catalytic mechanism.

It belongs to the thymidylate synthase ThyX family. Homotetramer. It depends on FAD as a cofactor.

It carries out the reaction dUMP + (6R)-5,10-methylene-5,6,7,8-tetrahydrofolate + NADPH + H(+) = dTMP + (6S)-5,6,7,8-tetrahydrofolate + NADP(+). Its pathway is pyrimidine metabolism; dTTP biosynthesis. Catalyzes the reductive methylation of 2'-deoxyuridine-5'-monophosphate (dUMP) to 2'-deoxythymidine-5'-monophosphate (dTMP) while utilizing 5,10-methylenetetrahydrofolate (mTHF) as the methyl donor, and NADPH and FADH(2) as the reductant. This chain is Flavin-dependent thymidylate synthase, found in Saccharolobus solfataricus (strain ATCC 35092 / DSM 1617 / JCM 11322 / P2) (Sulfolobus solfataricus).